The sequence spans 286 residues: Homoserine kinase (286 aa).

Residue 78 to 88 (PLARGLGSSSS) coordinates ATP.

It belongs to the GHMP kinase family. Homoserine kinase subfamily.

Its subcellular location is the cytoplasm. It catalyses the reaction L-homoserine + ATP = O-phospho-L-homoserine + ADP + H(+). Its pathway is amino-acid biosynthesis; L-threonine biosynthesis; L-threonine from L-aspartate: step 4/5. In terms of biological role, catalyzes the ATP-dependent phosphorylation of L-homoserine to L-homoserine phosphate. The protein is Homoserine kinase of Streptococcus suis (strain 98HAH33).